The sequence spans 339 residues: DNA-directed RNA polymerase subunit alpha (339 aa).

Residues 1-233 (MVREEVAGST…DLFLPFLHAE (233 aa)) are alpha N-terminal domain (alpha-NTD). Residues 264–339 (KKGIPLNSIF…IDLLKNKLSF (76 aa)) form an alpha C-terminal domain (alpha-CTD) region.

This sequence belongs to the RNA polymerase alpha chain family. As to quaternary structure, in plastids the minimal PEP RNA polymerase catalytic core is composed of four subunits: alpha, beta, beta', and beta''. When a (nuclear-encoded) sigma factor is associated with the core the holoenzyme is formed, which can initiate transcription.

Its subcellular location is the plastid. It is found in the chloroplast. It catalyses the reaction RNA(n) + a ribonucleoside 5'-triphosphate = RNA(n+1) + diphosphate. Functionally, DNA-dependent RNA polymerase catalyzes the transcription of DNA into RNA using the four ribonucleoside triphosphates as substrates. The polypeptide is DNA-directed RNA polymerase subunit alpha (Aegilops tauschii (Tausch's goatgrass)).